A 268-amino-acid chain; its full sequence is Tryptophan synthase alpha chain (268 aa).

Catalysis depends on proton acceptor residues Glu-49 and Asp-60.

The protein belongs to the TrpA family. In terms of assembly, tetramer of two alpha and two beta chains.

The catalysed reaction is (1S,2R)-1-C-(indol-3-yl)glycerol 3-phosphate + L-serine = D-glyceraldehyde 3-phosphate + L-tryptophan + H2O. It functions in the pathway amino-acid biosynthesis; L-tryptophan biosynthesis; L-tryptophan from chorismate: step 5/5. Its function is as follows. The alpha subunit is responsible for the aldol cleavage of indoleglycerol phosphate to indole and glyceraldehyde 3-phosphate. The protein is Tryptophan synthase alpha chain of Xanthomonas oryzae pv. oryzae (strain PXO99A).